A 301-amino-acid polypeptide reads, in one-letter code: Ribosomal RNA small subunit methyltransferase A (301 aa).

Residues Asn-23, Ile-25, Gly-50, Glu-72, Asp-97, and Asn-149 each contribute to the S-adenosyl-L-methionine site.

It belongs to the class I-like SAM-binding methyltransferase superfamily. rRNA adenine N(6)-methyltransferase family. RsmA subfamily.

It localises to the cytoplasm. The catalysed reaction is adenosine(1518)/adenosine(1519) in 16S rRNA + 4 S-adenosyl-L-methionine = N(6)-dimethyladenosine(1518)/N(6)-dimethyladenosine(1519) in 16S rRNA + 4 S-adenosyl-L-homocysteine + 4 H(+). Functionally, specifically dimethylates two adjacent adenosines (A1518 and A1519) in the loop of a conserved hairpin near the 3'-end of 16S rRNA in the 30S particle. May play a critical role in biogenesis of 30S subunits. This is Ribosomal RNA small subunit methyltransferase A from Rickettsia conorii (strain ATCC VR-613 / Malish 7).